We begin with the raw amino-acid sequence, 74 residues long: Small integral membrane protein 15 (74 aa).

Residues 20–40 (YGFLTTVILVLTPLFIISAAL) form a helical membrane-spanning segment. Positions 48–74 (IETREREQKKKRKRQENIVKAKRAKKD) form a coiled coil. A disordered region spans residues 53 to 74 (REQKKKRKRQENIVKAKRAKKD). The span at 56–74 (KKKRKRQENIVKAKRAKKD) shows a compositional bias: basic residues.

The protein belongs to the SMIM15 family.

It localises to the membrane. The chain is Small integral membrane protein 15 (SMIM15) from Gallus gallus (Chicken).